The sequence spans 109 residues: Small ribosomal subunit protein uS17 (109 aa).

Belongs to the universal ribosomal protein uS17 family. In terms of assembly, part of the 30S ribosomal subunit.

Its function is as follows. One of the primary rRNA binding proteins, it binds specifically to the 5'-end of 16S ribosomal RNA. This Methanococcus maripaludis (strain DSM 14266 / JCM 13030 / NBRC 101832 / S2 / LL) protein is Small ribosomal subunit protein uS17.